Here is a 744-residue protein sequence, read N- to C-terminus: Elongation factor G, mitochondrial (744 aa).

The transit peptide at 1–25 (MTISCLLRIRPALAKSFFENGQRAF) directs the protein to the mitochondrion. A tr-type G domain is found at 38-315 (ERIRNIGISA…AVLDYLPNPG (278 aa)). Residues 47–54 (AHIDSGKT), 114–118 (DTPGH), and 168–171 (NKLD) contribute to the GTP site.

The protein belongs to the TRAFAC class translation factor GTPase superfamily. Classic translation factor GTPase family. EF-G/EF-2 subfamily.

It is found in the mitochondrion. It participates in protein biosynthesis; polypeptide chain elongation. In terms of biological role, mitochondrial GTPase that catalyzes the GTP-dependent ribosomal translocation step during translation elongation. During this step, the ribosome changes from the pre-translocational (PRE) to the post-translocational (POST) state as the newly formed A-site-bound peptidyl-tRNA and P-site-bound deacylated tRNA move to the P and E sites, respectively. Catalyzes the coordinated movement of the two tRNA molecules, the mRNA and conformational changes in the ribosome. The sequence is that of Elongation factor G, mitochondrial from Culex quinquefasciatus (Southern house mosquito).